Consider the following 170-residue polypeptide: Peptide deformylase (170 aa).

Residues Cys-91 and His-133 each coordinate Fe cation. Residue Glu-134 is part of the active site. A Fe cation-binding site is contributed by His-137.

The protein belongs to the polypeptide deformylase family. Fe(2+) serves as cofactor.

It catalyses the reaction N-terminal N-formyl-L-methionyl-[peptide] + H2O = N-terminal L-methionyl-[peptide] + formate. Its function is as follows. Removes the formyl group from the N-terminal Met of newly synthesized proteins. Requires at least a dipeptide for an efficient rate of reaction. N-terminal L-methionine is a prerequisite for activity but the enzyme has broad specificity at other positions. The chain is Peptide deformylase from Yersinia pseudotuberculosis serotype O:1b (strain IP 31758).